A 532-amino-acid chain; its full sequence is Bone morphogenetic protein receptor type-1A (532 aa).

The first 23 residues, Met1–Gly23, serve as a signal peptide directing secretion. The Extracellular segment spans residues Gln24 to Arg152. 3 cysteine pairs are disulfide-bonded: Cys61–Cys82, Cys63–Cys67, and Cys76–Cys100. N-linked (GlcNAc...) asparagine glycosylation occurs at Asn73. The tract at residues Asp107–Gln109 is mediates specificity for BMP ligand. 2 cysteine pairs are disulfide-bonded: Cys110/Cys124 and Cys125/Cys130. Residues Trp153–Tyr176 form a helical membrane-spanning segment. Topologically, residues Lys177–Ile532 are cytoplasmic. The region spanning Glu204–Gln233 is the GS domain. Positions Ile234–Val525 constitute a Protein kinase domain. ATP contacts are provided by residues Val240–Val248 and Lys261. Asp362 (proton acceptor) is an active-site residue.

Belongs to the protein kinase superfamily. TKL Ser/Thr protein kinase family. TGFB receptor subfamily. Interacts with low affinity with GDF5; positively regulates chondrocyte differentiation. Interacts with BMP4. Interacts with SCUBE3. Interacts with TSC22D1/TSC-22. Interacts with BMP2; the interaction may induce HAMP expression. Interacts with BMP6. Interacts with heterodimers composed of BMP2 and BMP6 in vitro; the interaction may induce HAMP expression. Interacts with TGFBR3. The cofactor is Mg(2+). Mn(2+) serves as cofactor. In terms of processing, glycosylated. As to expression, highly expressed in skeletal muscle.

It is found in the cell membrane. It localises to the cell surface. The enzyme catalyses L-threonyl-[receptor-protein] + ATP = O-phospho-L-threonyl-[receptor-protein] + ADP + H(+). It carries out the reaction L-seryl-[receptor-protein] + ATP = O-phospho-L-seryl-[receptor-protein] + ADP + H(+). Functionally, on ligand binding, forms a receptor complex consisting of two type II and two type I transmembrane serine/threonine kinases. Type II receptors phosphorylate and activate type I receptors which autophosphorylate, then bind and activate SMAD transcriptional regulators. Receptor for BMP2, BMP4, GDF5 and GDF6. Positively regulates chondrocyte differentiation through GDF5 interaction. Mediates induction of adipogenesis by GDF6. May promote the expression of HAMP, potentially via its interaction with BMP2. This is Bone morphogenetic protein receptor type-1A (BMPR1A) from Homo sapiens (Human).